The chain runs to 881 residues: Protein translocase subunit SecA (881 aa).

ATP is bound by residues Gln83, 101 to 105 (GEGKT), and Asp492.

This sequence belongs to the SecA family.

It localises to the plastid. Its subcellular location is the chloroplast stroma. It is found in the chloroplast thylakoid membrane. The catalysed reaction is ATP + H2O + cellular proteinSide 1 = ADP + phosphate + cellular proteinSide 2.. In terms of biological role, has a central role in coupling the hydrolysis of ATP to the transfer of proteins across the thylakoid membrane. The polypeptide is Protein translocase subunit SecA (Emiliania huxleyi (Coccolithophore)).